Reading from the N-terminus, the 1878-residue chain is MDLSADRVEEVQNVLNAMQKILECPICLELIKEPVSTKCDHIFCKFCMLKLLNQRKGPSQCPLCKNDITKRSLQESTRFSQLVEELLKIIHAFELDTGLQFADSYNFSKKENNSPEHLKEEVSIIQSMGYRNRAKRLRQSEPENPTLETSLSVQLSNLGIVRSLRTKQQIQPQNKSVYIELGSDSSEDTVNKASSCSVGDDELEITSQGARAEASLNPAKKAACEFSGDITNIEHHQSSNKDLTTTEKHATKKHPEKYQGISVSNLHVEPCGTNTHASSLQHENSSLLLTKHRMNVEKAEICNNSKQPGLARSQQSRWAESKETCNDRQIPSTEKKVVVNADLLCGRKELNKQKPPHSDSPRDSQDVPWITLNSSIRKVNEWFSRSDEILTSDDSHDRGSELNTEVGGAVEVPNEVGEYSGSSEKIDLMASDPQDAFICESERVHTKPVGGNIEDKIFGKTYRRKASLPKVSHTTEVLTIGACAIEPQTMQTHPFMNKAEHKRRTTSSLHPEDFIKKVELGIVPKTPEKLIEGINQIKRDGHVINITNNGPENETEGDYVQKEKNANPTESLEKESAFRTKTEPMSSRISNMELELNSSSSKAPKKNRLRRKSSARHTCALEFVVNRNLNPPDHSELQIESCSSSEEMKKQHLDQVPVRHNKTLQLMQDKEPAGRAKKSSKPGEQINKRLASHAFPELTLTNVSGFFANYSSSSKPQECINPGLRREEIEESRRMTQVSDSTRDPKELVLSGGRGLQTERSVESTSISLVLDTDYGTQDSISLLEADTLRKAKTVSNQQANLCATIENPKEPIHGCSKDTRNDTEGFVVPLTCKDNHTQETSIEMEESELDTQCLRNMFKVSKRQSFALFSYPRDPEEDCVTVCPRSGAFGKQGPKVTLECGQKEESQGKKESEIRHVQAVHTNAGFSAVSQKAKKPGDFAKCSIKGVSRLCLSSQFKGKETELLIANYHGISQNPYHIPPLSPIRSCVKTLCQENLSEEKFEQHSMSPERAVGNERVIQSTVSTISQNNIRECASKEVGSSSVNEVVSSTNEVGSSVNEVGSSGENIQAELGRNRGPKLNAMLRLGLMQPEVCKQSLSLSNCKHPEMKWQGQSEGAVLSVSADFSPCLISDNPEQPMGSSRSSQVCSETPDDLLNGDKIKGKVSFAESDIKEKSAVFSKSVQSGEFSRSPSPSDHTRLAQGYQRGTKKLESSEENMSSEEEELPCFQHLIFGKVTNMPSQSTSHNAVAAEGLSNKTEENLDSLKNSLSDISNQVPSAKASQEHHLSEEARCSGSLFSSQCSALEDLTVNTNTQDPFSMFDPTSKQVRHQSENLDVLNDKELVSDDDDEREPGLEEDSPQEEQSVDSDLGEVASGYESETSLSEDCSRLSSQSDILTTQQRDTMQDNLIKLQQEMAELEAVLEQHESQPSNSSPSLIADSCSPEDLLNPEQNASERVLTSEKSSDSPISQNPESLSTDKFQVFLDSSTSKNGEPGMIRSSPSQSRLLDTRWYVHSCPRSLQDTNCPSQKELTKVVSMEEQQPTESEARDLMEQSYLSRPDLEGAPYLESGISLFSDDPESDPSSHRASELAHVSSMPTSTSALKLPQFQVEESAKSTAAVHIASTAGYNKSEDSVGIEKPEVISSTRGVNKRISMVASGLTPKEFMLVHKFARKHHISLTNLISEETTHVIMKTDAEFVCERTLKYFLGIAGGKWVVSYFWVTQSIKERKILDEHDFEVRGDVVNGRNHQGPKRARESQDRESQDRKIFRGLEICCYGPFTNMPTDQLEWMVHLCGASVVKEPSLFTLSKGTHPVVVVQPDAWTEDSGFHAIGQMCEAPVVTREWVLDSVALYQCQELDTYLIPQIPRTAADSSQPCV.

An N-acetylmethionine modification is found at Met-1. The segment at Cys-24–Lys-65 adopts an RING-type zinc-finger fold. Lys-109 participates in a covalent cross-link: Glycyl lysine isopeptide (Lys-Gly) (interchain with G-Cter in SUMO2). Ser-114 carries the phosphoserine modification. A Glycyl lysine isopeptide (Lys-Gly) (interchain with G-Cter in SUMO2) cross-link involves residue Lys-298. Residues Asn-303–Trp-318 show a composition bias toward polar residues. The disordered stretch occupies residues Asn-303–Gln-329. Lys-336 is covalently cross-linked (Glycyl lysine isopeptide (Lys-Gly) (interchain with G-Cter in SUMO2)). Positions Glu-349–Gln-365 are enriched in basic and acidic residues. Residues Glu-349–Pro-368 form a disordered region. Ser-392, Ser-395, Ser-420, and Ser-431 each carry phosphoserine. Glycyl lysine isopeptide (Lys-Gly) (interchain with G-Cter in SUMO2) cross-links involve residues Lys-456, Lys-516, and Lys-581. The tract at residues Asn-548–Ser-614 is disordered. Residues Tyr-559–Thr-582 show a composition bias toward basic and acidic residues. A compositionally biased stretch (low complexity) spans Ser-590–Ser-601. Over residues Ala-603–Ser-614 the composition is skewed to basic residues. 3 positions are modified to phosphoserine: Ser-692, Ser-712, and Ser-751. Residue Ser-987 is modified to Phosphoserine; by CHEK2. Ser-1008 is subject to Phosphoserine. Lys-1079 is covalently cross-linked (Glycyl lysine isopeptide (Lys-Gly) (interchain with G-Cter in SUMO2)). Disordered stretches follow at residues Pro-1134–Leu-1154 and Gln-1183–Glu-1221. Composition is skewed to polar residues over residues Met-1138 to Ser-1148 and Gln-1183 to Ser-1194. Phosphoserine is present on residues Ser-1144, Ser-1190, Ser-1192, Ser-1212, Ser-1218, Ser-1219, and Ser-1281. Polar residues predominate over residues Asp-1315–Lys-1325. Disordered stretches follow at residues Asp-1315–Arg-1401 and Glu-1419–Ser-1504. The span at His-1329 to Val-1343 shows a compositional bias: basic and acidic residues. Phosphoserine occurs at positions 1331, 1344, and 1391. A compositionally biased stretch (acidic residues) spans Ser-1344–Leu-1369. Positions Glu-1377–Arg-1401 are enriched in polar residues. Thr-1398 is subject to Phosphothreonine. Positions Arg-1401–Gln-1428 are interaction with PALB2. A phosphoserine mark is found at Ser-1427 and Ser-1460. The segment covering Asp-1465–Asn-1491 has biased composition (polar residues). Phosphoserine is present on residues Ser-1527 and Ser-1545. Residues Gly-1570–Leu-1590 form a disordered region. 2 consecutive BRCT domains span residues Arg-1652–Val-1739 and Gln-1764–Ile-1863. The tract at residues Val-1743–Gln-1764 is disordered. The segment covering Arg-1754–Gln-1764 has biased composition (basic and acidic residues).

In terms of assembly, heterodimer with BARD1. Part of the BRCA1-associated genome surveillance complex (BASC), which contains BRCA1, MSH2, MSH6, MLH1, ATM, BLM, PMS2 and the MRE11-RAD50-NBN protein (MRN) complex. This association could be a dynamic process changing throughout the cell cycle and within subnuclear domains. Component of the BRCA1-A complex, at least composed of BRCA1, BARD1, UIMC1/RAP80, ABRAXAS1, BRCC3/BRCC36, BABAM2 and BABAM1/NBA1. Interacts (via the BRCT domains) with ABRAXAS1 (phosphorylated form); this is important for recruitment to sites of DNA damage. Can form a heterotetramer with two molecules of ABRAXAS1 (phosphorylated form). Component of the BRCA1-RBBP8 complex. Interacts (via the BRCT domains) with RBBP8 ('Ser-327' phosphorylated form); the interaction ubiquitinates RBBP8, regulates CHEK1 activation, and involves RBBP8 in BRCA1-dependent G2/M checkpoint control on DNA damage. Associates with RNA polymerase II holoenzyme. Interacts with SMC1A, NELFB, DCLRE1C, CLSPN. CHEK1, CHEK2, BAP1, BRCC3, UBXN1 and PCLAF. Interacts (via BRCT domains) with BRIP1 (phosphorylated form). Interacts with FANCD2 (ubiquitinated form). Interacts with H2AX (phosphorylated on 'Ser-140'). Interacts (via the BRCT domains) with ACACA (phosphorylated form); the interaction prevents dephosphorylation of ACACA. Part of a BRCA complex containing BRCA1, BRCA2 and PALB2. Interacts directly with PALB2; the interaction is essential for its function in HRR. Interacts directly with BRCA2; the interaction occurs only in the presence of PALB2 which serves as the bridging protein. Interacts (via the BRCT domains) with LMO4; the interaction represses the transcriptional activity of BRCA1. Interacts (via the BRCT domains) with CCAR2 (via N-terminus); the interaction represses the transcriptional activator activity of BRCA1. Interacts with EXD2. Interacts (via C-terminus) with DHX9; this interaction is direct and links BRCA1 to the RNA polymerase II holoenzyme. Interacts with DNA helicase ZGRF1; the interaction is increased following DNA damage induction. In terms of processing, phosphorylated in response to IR, UV, and various stimuli that cause checkpoint activation, probably by ATM or ATR. Phosphorylation at Ser-987 by CHEK2 regulates mitotic spindle assembly. Phosphorylation by AURKA regulates centrosomal microtubule nucleation. Autoubiquitinated, undergoes 'Lys-6'-linked polyubiquitination. 'Lys-6'-linked polyubiquitination does not promote degradation.

The protein localises to the nucleus. Its subcellular location is the chromosome. The protein resides in the cytoplasm. It carries out the reaction S-ubiquitinyl-[E2 ubiquitin-conjugating enzyme]-L-cysteine + [acceptor protein]-L-lysine = [E2 ubiquitin-conjugating enzyme]-L-cysteine + N(6)-ubiquitinyl-[acceptor protein]-L-lysine.. The protein operates within protein modification; protein ubiquitination. In terms of biological role, E3 ubiquitin-protein ligase that specifically mediates the formation of 'Lys-6'-linked polyubiquitin chains and plays a central role in DNA repair by facilitating cellular responses to DNA damage. It is unclear whether it also mediates the formation of other types of polyubiquitin chains. The BRCA1-BARD1 heterodimer coordinates a diverse range of cellular pathways such as DNA damage repair, ubiquitination and transcriptional regulation to maintain genomic stability. Regulates centrosomal microtubule nucleation. Required for appropriate cell cycle arrests after ionizing irradiation in both the S-phase and the G2 phase of the cell cycle. Required for FANCD2 targeting to sites of DNA damage. Inhibits lipid synthesis by binding to inactive phosphorylated ACACA and preventing its dephosphorylation. Contributes to homologous recombination repair (HRR) via its direct interaction with PALB2, fine-tunes recombinational repair partly through its modulatory role in the PALB2-dependent loading of BRCA2-RAD51 repair machinery at DNA breaks. Component of the BRCA1-RBBP8 complex which regulates CHEK1 activation and controls cell cycle G2/M checkpoints on DNA damage via BRCA1-mediated ubiquitination of RBBP8. Acts as a transcriptional activator. In Canis lupus familiaris (Dog), this protein is Breast cancer type 1 susceptibility protein homolog (BRCA1).